The following is an 857-amino-acid chain: DNA mismatch repair protein MutS (857 aa).

613-620 contributes to the ATP binding site; sequence GPNMGGKS. A disordered region spans residues 797 to 820; that stretch reads TSLPHEQPAAHKAKDAPQVPHQSD.

It belongs to the DNA mismatch repair MutS family.

Its function is as follows. This protein is involved in the repair of mismatches in DNA. It is possible that it carries out the mismatch recognition step. This protein has a weak ATPase activity. This chain is DNA mismatch repair protein MutS, found in Pseudomonas putida (strain ATCC 47054 / DSM 6125 / CFBP 8728 / NCIMB 11950 / KT2440).